The chain runs to 387 residues: Probable peptidoglycan glycosyltransferase FtsW (387 aa).

Helical transmembrane passes span 20–40 (LYLLGAAVALMGLGWVMVGSA), 61–81 (LFLLLGLVTAFGVWRIRLAFW), 86–106 (PVMLLLGLGLLLLTLIPGIGV), 149–169 (TIRGFLFPVGVFAMAGLLLLL), 172–192 (DFGAVVVLFATLLGMLFLGGA), 194–214 (LWHFLLLAALGGASLAALAWY), 284–304 (LMGSLAVIALFVVFIYRVLLI), 322–342 (GLGIWIGLQAFINLGVNMGVL), and 349–369 (LPLMSAGGSSSIVTCVAVALI).

The protein belongs to the SEDS family. FtsW subfamily.

It localises to the cell inner membrane. The catalysed reaction is [GlcNAc-(1-&gt;4)-Mur2Ac(oyl-L-Ala-gamma-D-Glu-L-Lys-D-Ala-D-Ala)](n)-di-trans,octa-cis-undecaprenyl diphosphate + beta-D-GlcNAc-(1-&gt;4)-Mur2Ac(oyl-L-Ala-gamma-D-Glu-L-Lys-D-Ala-D-Ala)-di-trans,octa-cis-undecaprenyl diphosphate = [GlcNAc-(1-&gt;4)-Mur2Ac(oyl-L-Ala-gamma-D-Glu-L-Lys-D-Ala-D-Ala)](n+1)-di-trans,octa-cis-undecaprenyl diphosphate + di-trans,octa-cis-undecaprenyl diphosphate + H(+). It participates in cell wall biogenesis; peptidoglycan biosynthesis. Functionally, peptidoglycan polymerase that is essential for cell division. The polypeptide is Probable peptidoglycan glycosyltransferase FtsW (Nitrosococcus halophilus (strain Nc4)).